A 481-amino-acid chain; its full sequence is Bifunctional protein GlmU (481 aa).

The interval 1-235 (MTHKERPLDV…PDEVMGANDR (235 aa)) is pyrophosphorylase. Residues 13-16 (LAAG), Lys-27, Gln-78, 83-84 (GT), 107-109 (YGD), Gly-146, Glu-161, Asn-176, and Asn-233 each bind UDP-N-acetyl-alpha-D-glucosamine. Asp-109 provides a ligand contact to Mg(2+). Asn-233 provides a ligand contact to Mg(2+). The segment at 236 to 256 (VQLAQAAAVLRRRINTAHMQA) is linker. Positions 257 to 481 (GVTLQDPSTI…PWLAGWLERQ (225 aa)) are N-acetyltransferase. UDP-N-acetyl-alpha-D-glucosamine contacts are provided by Arg-339 and Lys-357. The active-site Proton acceptor is the His-369. Positions 372 and 383 each coordinate UDP-N-acetyl-alpha-D-glucosamine. Residues Ala-386, Ser-411, Ala-429, and Arg-446 each contribute to the acetyl-CoA site.

It in the N-terminal section; belongs to the N-acetylglucosamine-1-phosphate uridyltransferase family. The protein in the C-terminal section; belongs to the transferase hexapeptide repeat family. As to quaternary structure, homotrimer. It depends on Mg(2+) as a cofactor.

The protein localises to the cytoplasm. The enzyme catalyses alpha-D-glucosamine 1-phosphate + acetyl-CoA = N-acetyl-alpha-D-glucosamine 1-phosphate + CoA + H(+). It catalyses the reaction N-acetyl-alpha-D-glucosamine 1-phosphate + UTP + H(+) = UDP-N-acetyl-alpha-D-glucosamine + diphosphate. It participates in nucleotide-sugar biosynthesis; UDP-N-acetyl-alpha-D-glucosamine biosynthesis; N-acetyl-alpha-D-glucosamine 1-phosphate from alpha-D-glucosamine 6-phosphate (route II): step 2/2. Its pathway is nucleotide-sugar biosynthesis; UDP-N-acetyl-alpha-D-glucosamine biosynthesis; UDP-N-acetyl-alpha-D-glucosamine from N-acetyl-alpha-D-glucosamine 1-phosphate: step 1/1. It functions in the pathway bacterial outer membrane biogenesis; LPS lipid A biosynthesis. Its function is as follows. Catalyzes the last two sequential reactions in the de novo biosynthetic pathway for UDP-N-acetylglucosamine (UDP-GlcNAc). The C-terminal domain catalyzes the transfer of acetyl group from acetyl coenzyme A to glucosamine-1-phosphate (GlcN-1-P) to produce N-acetylglucosamine-1-phosphate (GlcNAc-1-P), which is converted into UDP-GlcNAc by the transfer of uridine 5-monophosphate (from uridine 5-triphosphate), a reaction catalyzed by the N-terminal domain. The protein is Bifunctional protein GlmU of Deinococcus geothermalis (strain DSM 11300 / CIP 105573 / AG-3a).